Reading from the N-terminus, the 296-residue chain is ATP synthase gamma chain (296 aa).

This sequence belongs to the ATPase gamma chain family. As to quaternary structure, F-type ATPases have 2 components, CF(1) - the catalytic core - and CF(0) - the membrane proton channel. CF(1) has five subunits: alpha(3), beta(3), gamma(1), delta(1), epsilon(1). CF(0) has three main subunits: a, b and c.

Its subcellular location is the cell inner membrane. Produces ATP from ADP in the presence of a proton gradient across the membrane. The gamma chain is believed to be important in regulating ATPase activity and the flow of protons through the CF(0) complex. This chain is ATP synthase gamma chain, found in Methylorubrum extorquens (strain PA1) (Methylobacterium extorquens).